The following is a 411-amino-acid chain: LL-diaminopimelate aminotransferase (411 aa).

2 residues coordinate substrate: Tyr-15 and Gly-42. Residues Tyr-72, 108 to 109 (SK), Tyr-132, Asn-187, Tyr-218, and 246 to 248 (SFS) each bind pyridoxal 5'-phosphate. Substrate contacts are provided by Lys-109, Tyr-132, and Asn-187. N6-(pyridoxal phosphate)lysine is present on Lys-249. Positions 257 and 292 each coordinate pyridoxal 5'-phosphate. Residues Asn-292 and Arg-388 each contribute to the substrate site.

It belongs to the class-I pyridoxal-phosphate-dependent aminotransferase family. LL-diaminopimelate aminotransferase subfamily. As to quaternary structure, homodimer. Pyridoxal 5'-phosphate is required as a cofactor.

It catalyses the reaction (2S,6S)-2,6-diaminopimelate + 2-oxoglutarate = (S)-2,3,4,5-tetrahydrodipicolinate + L-glutamate + H2O + H(+). It participates in amino-acid biosynthesis; L-lysine biosynthesis via DAP pathway; LL-2,6-diaminopimelate from (S)-tetrahydrodipicolinate (aminotransferase route): step 1/1. In terms of biological role, involved in the synthesis of meso-diaminopimelate (m-DAP or DL-DAP), required for both lysine and peptidoglycan biosynthesis. Catalyzes the direct conversion of tetrahydrodipicolinate to LL-diaminopimelate. The protein is LL-diaminopimelate aminotransferase of Geobacter sp. (strain M21).